The primary structure comprises 722 residues: Biotin--protein ligase (722 aa).

Residues 27-93 (KELGKASDKQ…EPAADGDPGL (67 aa)) form a disordered region. Over residues 46–55 (ASPEAQPAQG) the composition is skewed to low complexity. The residue at position 295 (Ser-295) is a Phosphoserine. The 190-residue stretch at 459–648 (TRLGKVILFA…VLEKLIDRFQ (190 aa)) folds into the BPL/LPL catalytic domain.

It belongs to the biotin--protein ligase family. Monomer.

The protein resides in the cytoplasm. It localises to the mitochondrion. It catalyses the reaction apo-[methylmalonyl-CoA:pyruvate carboxytransferase] + biotin + ATP = holo-[methylmalonyl-CoA:pyruvate carboxytransferase] + AMP + diphosphate + H(+). It carries out the reaction apo-[propionyl-CoA:carbon-dioxide ligase (ADP-forming)] + biotin + ATP = holo-[propionyl-CoA:carbon-dioxide ligase (ADP-forming)] + AMP + diphosphate + H(+). The enzyme catalyses apo-[3-methylcrotonoyl-CoA:carbon-dioxide ligase (ADP-forming)] + biotin + ATP = holo-[3-methylcrotonoyl-CoA:carbon-dioxide ligase (ADP-forming)] + AMP + diphosphate + H(+). The catalysed reaction is biotin + L-lysyl-[protein] + ATP = N(6)-biotinyl-L-lysyl-[protein] + AMP + diphosphate + H(+). Its function is as follows. Biotin--protein ligase catalyzing the biotinylation of the 4 biotin-dependent carboxylases acetyl-CoA-carboxylase, pyruvate carboxylase, propionyl-CoA carboxylase, and methylcrotonyl-CoA carboxylase. The polypeptide is Biotin--protein ligase (Mus musculus (Mouse)).